A 395-amino-acid polypeptide reads, in one-letter code: Major capsid protein P3 (395 aa).

In terms of assembly, homotrimer.

The protein localises to the virion. Functionally, major capsid protein self-assembles to form an icosahedral capsid with a pseudo T=25 symmetry, about 66 nm in diameter, and consisting of 240 capsid proteins trimers. The capsid encapsulates an inner membrane and the genomic dsDNA genome. The major coat protein P3 and two assembly factors (P10 and P17) are needed during the assembly of the virus particle inside the host cell, when the capsid protein multimers are capable of enclosing the host-derived membrane, containing the virus-encoded membrane-associated proteins. The polypeptide is Major capsid protein P3 (III) (Acinetobacter calcoaceticus (Arthrobacter siderocapsulatus)).